The following is a 362-amino-acid chain: DNA replication and repair protein RecF (362 aa).

Position 30-37 (30-37) interacts with ATP; it reads GPNGSGKT.

It belongs to the RecF family.

It is found in the cytoplasm. In terms of biological role, the RecF protein is involved in DNA metabolism; it is required for DNA replication and normal SOS inducibility. RecF binds preferentially to single-stranded, linear DNA. It also seems to bind ATP. The protein is DNA replication and repair protein RecF of Proteus mirabilis (strain HI4320).